The chain runs to 730 residues: Catalase-peroxidase (730 aa).

Positions 1 to 21 (MTENKCPVTGKMSKATAGSGT) are disordered. Positions 95–218 (WHSAGTYRVG…LAAVQMGLIY (124 aa)) form a cross-link, tryptophyl-tyrosyl-methioninium (Trp-Tyr) (with M-244). H96 acts as the Proton acceptor in catalysis. A cross-link (tryptophyl-tyrosyl-methioninium (Tyr-Met) (with W-95)) is located at residues 218 to 244 (YVNPEGPNGNPDPLGSAHDVRETFARM). H259 lines the heme b pocket.

The protein belongs to the peroxidase family. Peroxidase/catalase subfamily. Homodimer or homotetramer. Requires heme b as cofactor. In terms of processing, formation of the three residue Trp-Tyr-Met cross-link is important for the catalase, but not the peroxidase activity of the enzyme.

The enzyme catalyses H2O2 + AH2 = A + 2 H2O. The catalysed reaction is 2 H2O2 = O2 + 2 H2O. Functionally, bifunctional enzyme with both catalase and broad-spectrum peroxidase activity. This is Catalase-peroxidase from Clostridium botulinum (strain Alaska E43 / Type E3).